Reading from the N-terminus, the 184-residue chain is Elongation factor P (184 aa).

This sequence belongs to the elongation factor P family.

Its subcellular location is the cytoplasm. Its pathway is protein biosynthesis; polypeptide chain elongation. Its function is as follows. Involved in peptide bond synthesis. Stimulates efficient translation and peptide-bond synthesis on native or reconstituted 70S ribosomes in vitro. Probably functions indirectly by altering the affinity of the ribosome for aminoacyl-tRNA, thus increasing their reactivity as acceptors for peptidyl transferase. This Polaromonas sp. (strain JS666 / ATCC BAA-500) protein is Elongation factor P.